Reading from the N-terminus, the 162-residue chain is Ubiquitin D (162 aa).

Ubiquitin-like domains lie at 3–78 (SVRT…LKVV) and 87–160 (LFLV…THCT).

Belongs to the ubiquitin D family. Interacts directly with the 26S proteasome. Interacts with NUB1; this interaction facilitates the linking of UBD-conjugated target protein to the proteasome complex and accelerates its own degradation and that of its conjugates. Interacts (via ubiquitin-like 1 domain) with the spindle checkpoint protein MAD2L1 during mitosis. Present in aggresomes of proteasome inhibited cells. Interacts with HDAC6 under proteasome impairment conditions. Forms a thioester with UBA6 in cells stimulated with tumor necrosis factor-alpha (TNFa) and interferon-gamma (IFNg). Interacts with SQSTM1 and TP53/p53. Post-translationally, can be acetylated. In terms of tissue distribution, mostly expressed in thymus and intestine.

Its subcellular location is the nucleus. It localises to the cytoplasm. In terms of biological role, ubiquitin-like protein modifier which can be covalently attached to target proteins and subsequently leads to their degradation by the 26S proteasome, in a NUB1-dependent manner. Conjugation to the target protein is activated by UBA6 via adenylation of its C-terminal glycine. Probably functions as a survival factor. Promotes the expression of the proteasome subunit beta type-9 (PSMB9/LMP2). Regulates TNF-alpha-induced and LPS-mediated activation of the central mediator of innate immunity NF-kappa-B by promoting TNF-alpha-mediated proteasomal degradation of ubiquitinated-I-kappa-B-alpha. Required for TNF-alpha-induced p65 nuclear translocation in renal tubular epithelial cells (RTECs). May be involved in dendritic cell (DC) maturation, the process by which immature dendritic cells differentiate into fully competent antigen-presenting cells that initiate T-cell responses. Mediates mitotic non-disjunction and chromosome instability, in long-term in vitro culture and cancers, by abbreviating mitotic phase and impairing the kinetochore localization of MAD2L1 during the prometaphase stage of the cell cycle. May be involved in the formation of aggresomes when proteasome is saturated or impaired. Mediates apoptosis in a caspase-dependent manner, especially in renal epithelium and tubular cells during renal diseases. This is Ubiquitin D (Ubd) from Mus musculus (Mouse).